Consider the following 158-residue polypeptide: MRVLPLALLVGLLAVSDAKVLGKCEFARLLETRYNLSRNDIKNWVCIAEFESSFNTAATNRNRNRSTDYGIFQINNKYWCGSDYGKNVCGIPCSDLMSDDITAALRCAETVRRATERYRGRGKGYTAWVAYNSKCKKRDLDQYMAECWSRGSNSIFPF.

Positions 1-18 are cleaved as a signal peptide; it reads MRVLPLALLVGLLAVSDA. A C-type lysozyme domain is found at 19 to 150; the sequence is KVLGKCEFAR…DQYMAECWSR (132 aa). Intrachain disulfides connect cysteine 24/cysteine 147, cysteine 46/cysteine 135, cysteine 80/cysteine 93, and cysteine 89/cysteine 107. Active-site residues include glutamate 51 and aspartate 68.

This sequence belongs to the glycosyl hydrolase 22 family. In terms of assembly, monomer. In terms of tissue distribution, strongly expressed in gill and gonad, and marginally detectable in hemolymph and lymphoid organ. Not expressed in kidney, hepatopancreas or tail muscle.

It localises to the secreted. The catalysed reaction is Hydrolysis of (1-&gt;4)-beta-linkages between N-acetylmuramic acid and N-acetyl-D-glucosamine residues in a peptidoglycan and between N-acetyl-D-glucosamine residues in chitodextrins.. In terms of biological role, lysozymes have primarily a bacteriolytic function; those in tissues and body fluids are associated with the monocyte-macrophage system and enhance the activity of immunoagents. Has bacteriolytic activity against Gram-positive bacterium M.luteus, and Gram-negative shrimp pathogenic bacteria V.alginolyticus, V.parahaemolyticus and V.vulnificus. May play a role in host defense. The polypeptide is Lysozyme C (Penaeus merguiensis (Banana prawn)).